A 369-amino-acid chain; its full sequence is Phenylalanine--tRNA ligase alpha subunit (369 aa).

Residue E270 coordinates Mg(2+).

It belongs to the class-II aminoacyl-tRNA synthetase family. Phe-tRNA synthetase alpha subunit type 1 subfamily. As to quaternary structure, tetramer of two alpha and two beta subunits. The cofactor is Mg(2+).

The protein resides in the cytoplasm. The enzyme catalyses tRNA(Phe) + L-phenylalanine + ATP = L-phenylalanyl-tRNA(Phe) + AMP + diphosphate + H(+). This Phenylobacterium zucineum (strain HLK1) protein is Phenylalanine--tRNA ligase alpha subunit.